The following is a 145-amino-acid chain: D-aminoacyl-tRNA deacylase (145 aa).

Positions Gly137–Pro138 match the Gly-cisPro motif, important for rejection of L-amino acids motif.

The protein belongs to the DTD family. In terms of assembly, homodimer.

It localises to the cytoplasm. It catalyses the reaction glycyl-tRNA(Ala) + H2O = tRNA(Ala) + glycine + H(+). It carries out the reaction a D-aminoacyl-tRNA + H2O = a tRNA + a D-alpha-amino acid + H(+). In terms of biological role, an aminoacyl-tRNA editing enzyme that deacylates mischarged D-aminoacyl-tRNAs. Also deacylates mischarged glycyl-tRNA(Ala), protecting cells against glycine mischarging by AlaRS. Acts via tRNA-based rather than protein-based catalysis; rejects L-amino acids rather than detecting D-amino acids in the active site. By recycling D-aminoacyl-tRNA to D-amino acids and free tRNA molecules, this enzyme counteracts the toxicity associated with the formation of D-aminoacyl-tRNA entities in vivo and helps enforce protein L-homochirality. This Shewanella baltica (strain OS195) protein is D-aminoacyl-tRNA deacylase.